A 285-amino-acid polypeptide reads, in one-letter code: Enterobactin synthase component B (285 aa).

Positions 2 to 213 (AIPKLQAYAL…EELLPAPIPA (212 aa)) are isochorismatase. Residues 209–284 (APIPASKAAL…AWWKLLSREV (76 aa)) form the Carrier domain. Asp227, Gly242, and Asp244 together coordinate Mg(2+). Ser245 carries the post-translational modification O-(pantetheine 4'-phosphoryl)serine.

This sequence in the N-terminal section; belongs to the isochorismatase family. As to quaternary structure, proteins EntB, EntD, EntE, and EntF form a multienzyme complex called enterobactin synthase. Homodimer. Also forms a specific pairwise interaction with EntC; this interaction likely facilitates substrate channeling to connect the EntB and EntC active sites. Mg(2+) is required as a cofactor. 4'-phosphopantetheine is transferred from CoA to a specific serine of apo-EntB by EntD. Holo-EntB so formed is then acylated with 2,3-dihydroxybenzoate in a reaction catalyzed by EntE.

The protein resides in the cytoplasm. The enzyme catalyses 3 2,3-dihydroxybenzoate + 3 L-serine + 6 ATP = enterobactin + 6 AMP + 6 diphosphate + 4 H(+). It catalyses the reaction isochorismate + H2O = (2S,3S)-2,3-dihydroxy-2,3-dihydrobenzoate + pyruvate. It participates in siderophore biosynthesis; enterobactin biosynthesis. Involved in the biosynthesis of the siderophore enterobactin (enterochelin), which is a macrocyclic trimeric lactone of N-(2,3-dihydroxybenzoyl)-serine. The serine trilactone serves as a scaffolding for the three catechol functionalities that provide hexadentate coordination for the tightly ligated iron(3+) atoms. EntB is a bifunctional protein that serves as an isochorismate lyase and an aryl carrier protein (ArCP). Catalyzes the conversion of isochorismate to 2,3-dihydro-2,3-dihydroxybenzoate (2,3-diDHB), the precursor of 2,3-dihydroxybenzoate (DHB). In the enterobactin assembly, EntB functions as an aryl carrier protein phosphopantetheinylated near the C terminus by EntD to yield holo-EntB, which is then acylated by EntE with 2,3-dihydroxybenzoyl-AMP to form DHB-holo-EntB. Then this product will serve in the formation of the amide bond between 2,3-dihydroxybenzoate (DHB) and L-serine. The polypeptide is Enterobactin synthase component B (Escherichia coli O157:H7).